A 311-amino-acid chain; its full sequence is Aspartate carbamoyltransferase catalytic subunit (311 aa).

Residues arginine 55 and threonine 56 each coordinate carbamoyl phosphate. Lysine 85 provides a ligand contact to L-aspartate. Arginine 106, histidine 135, and glutamine 138 together coordinate carbamoyl phosphate. Arginine 168 and arginine 230 together coordinate L-aspartate. Leucine 268 and proline 269 together coordinate carbamoyl phosphate.

It belongs to the aspartate/ornithine carbamoyltransferase superfamily. ATCase family. Heterododecamer (2C3:3R2) of six catalytic PyrB chains organized as two trimers (C3), and six regulatory PyrI chains organized as three dimers (R2).

It catalyses the reaction carbamoyl phosphate + L-aspartate = N-carbamoyl-L-aspartate + phosphate + H(+). Its pathway is pyrimidine metabolism; UMP biosynthesis via de novo pathway; (S)-dihydroorotate from bicarbonate: step 2/3. In terms of biological role, catalyzes the condensation of carbamoyl phosphate and aspartate to form carbamoyl aspartate and inorganic phosphate, the committed step in the de novo pyrimidine nucleotide biosynthesis pathway. This chain is Aspartate carbamoyltransferase catalytic subunit, found in Escherichia coli O139:H28 (strain E24377A / ETEC).